The primary structure comprises 194 residues: Archaetidylinositol phosphate synthase (194 aa).

Transmembrane regions (helical) follow at residues 32–51 (IYTLASPVAAAAALPAWLYI) and 58–78 (LLIALSLLLDAVDGAVARFTG). Mg(2+)-binding residues include Asp67, Asp70, Asp88, and Asp92. Asp92 acts as the Proton acceptor in catalysis. 3 consecutive transmembrane segments (helical) span residues 103-123 (LYIAGVHPLIVIAMLSGGLIV), 150-170 (IAILAILAISIYNLQTALALA), and 172-192 (AAAVLVWITVIQRMVYIAGEL).

Belongs to the CDP-alcohol phosphatidyltransferase class-I family. It depends on Mn(2+) as a cofactor. Mg(2+) is required as a cofactor.

Its subcellular location is the cell membrane. The catalysed reaction is CDP-2,3-bis-O-(phytanyl)-sn-glycerol + 1D-myo-inositol 3-phosphate = saturated 1-archaetidyl-1D-myo-inositol 3-phosphate + CMP + H(+). It participates in lipid metabolism; phospholipid metabolism. Functionally, catalyzes the formation of archaetidylinositol phosphate (AIP) from CDP-archaeol (CDP-ArOH or CDP-2,3-bis-(O-phytanyl)-sn-glycerol) and 1L-myo-inositol 1-phosphate (IP or 1D-myo-inositol 3-phosphate). AIP is a precursor of archaetidyl-myo-inositol (AI), an ether-type inositol phospholipid ubiquitously distributed in archaea membranes and essential for glycolipid biosynthesis in archaea. This is Archaetidylinositol phosphate synthase from Aeropyrum pernix (strain ATCC 700893 / DSM 11879 / JCM 9820 / NBRC 100138 / K1).